The sequence spans 151 residues: Peptide methionine sulfoxide reductase MsrB (151 aa).

One can recognise a MsrB domain in the interval 9-132 (DGELKRTLTK…NSAALKFIPF (124 aa)). C121 functions as the Nucleophile in the catalytic mechanism.

This sequence belongs to the MsrB Met sulfoxide reductase family.

The enzyme catalyses L-methionyl-[protein] + [thioredoxin]-disulfide + H2O = L-methionyl-(R)-S-oxide-[protein] + [thioredoxin]-dithiol. The polypeptide is Peptide methionine sulfoxide reductase MsrB (Mycoplasma pneumoniae (strain ATCC 29342 / M129 / Subtype 1) (Mycoplasmoides pneumoniae)).